Consider the following 66-residue polypeptide: Large ribosomal subunit protein bL33c (66 aa).

It belongs to the bacterial ribosomal protein bL33 family.

The protein localises to the plastid. It is found in the chloroplast. The sequence is that of Large ribosomal subunit protein bL33c from Welwitschia mirabilis (Tree tumbo).